A 163-amino-acid chain; its full sequence is Large ribosomal subunit protein bL17 (163 aa).

Residues 127-163 (VAKKATRTRRSKKSAEAAAPAAVEAPATEEPKAESAE) are disordered. Residues 129–138 (KKATRTRRSK) are compositionally biased toward basic residues. Residues 142-154 (EAAAPAAVEAPAT) show a composition bias toward low complexity.

This sequence belongs to the bacterial ribosomal protein bL17 family. In terms of assembly, part of the 50S ribosomal subunit. Contacts protein L32.

The protein is Large ribosomal subunit protein bL17 of Bacteroides thetaiotaomicron (strain ATCC 29148 / DSM 2079 / JCM 5827 / CCUG 10774 / NCTC 10582 / VPI-5482 / E50).